Consider the following 71-residue polypeptide: Large ribosomal subunit protein uL29 (71 aa).

The protein belongs to the universal ribosomal protein uL29 family.

This Methanococcus maripaludis (strain C7 / ATCC BAA-1331) protein is Large ribosomal subunit protein uL29.